The sequence spans 877 residues: Bifunctional uridylyltransferase/uridylyl-removing enzyme (877 aa).

The interval M1–P335 is uridylyltransferase. A uridylyl-removing region spans residues V336 to V695. One can recognise an HD domain in the interval V454–L576. 2 consecutive ACT domains span residues E696–R778 and I805–Q877.

It belongs to the GlnD family. Requires Mg(2+) as cofactor.

It carries out the reaction [protein-PII]-L-tyrosine + UTP = [protein-PII]-uridylyl-L-tyrosine + diphosphate. The catalysed reaction is [protein-PII]-uridylyl-L-tyrosine + H2O = [protein-PII]-L-tyrosine + UMP + H(+). Uridylyltransferase (UTase) activity is inhibited by glutamine, while glutamine activates uridylyl-removing (UR) activity. In terms of biological role, modifies, by uridylylation and deuridylylation, the PII regulatory proteins (GlnB and homologs), in response to the nitrogen status of the cell that GlnD senses through the glutamine level. Under low glutamine levels, catalyzes the conversion of the PII proteins and UTP to PII-UMP and PPi, while under higher glutamine levels, GlnD hydrolyzes PII-UMP to PII and UMP (deuridylylation). Thus, controls uridylylation state and activity of the PII proteins, and plays an important role in the regulation of nitrogen fixation and metabolism. In Methylococcus capsulatus (strain ATCC 33009 / NCIMB 11132 / Bath), this protein is Bifunctional uridylyltransferase/uridylyl-removing enzyme.